The primary structure comprises 459 residues: MVKEKEYYERLGVKPDCTEDELKKAYRKMAVKYHPDKNQGPGKDAAEAKFKDISEAYEVLSDPEKRKMYDSYGSEGMKESGFHASSAEDLFSHFFGAGGGGGGFSFGGGGGDDFGGFSFGNMGGMGGMGGMGGGHKKRRKGEDIEHEMNRSLEELYNGKLVKISISRDEVCKTCKGSGSNKPGVTTTCPTCNGSRYVFQKKQVGPGMIQQVQTACHTCHGTGEKIKEEDKCKECKGKRVIQGKKIVQFQVEKGTRDGERIMLQGQGSEYPGVPPGDVIITIREKPNVNFKRNGDNLIYTKRLKLLDSIAGSQFIINTLDQRKLWVNHEKGDIIKQGDMRYIENEGMPIKGTSRKGKLIIAFDIEYPSNLTNDDIEKLSKILPKAATPSVSKSDCKSVGLSKVNFNTNEQSSHGGAGGAYQQHGGAYGHQKQQQQGFNPADFGAQFGGGGPQQAQQCQQQ.

In terms of domain architecture, J spans 6 to 73 (EYYERLGVKP…EKRKMYDSYG (68 aa)). Residues 158–243 (GKLVKISISR…CKGKRVIQGK (86 aa)) form a CR-type zinc finger. Zn(2+)-binding residues include cysteine 171, cysteine 174, cysteine 188, cysteine 191, cysteine 215, cysteine 218, cysteine 231, and cysteine 234. 4 CXXCXGXG motif repeats span residues 171–178 (CKTCKGSG), 188–195 (CPTCNGSR), 215–222 (CHTCHGTG), and 231–238 (CKECKGKR). The segment at 405 to 459 (NTNEQSSHGGAGGAYQQHGGAYGHQKQQQQGFNPADFGAQFGGGGPQQAQQCQQQ) is disordered. Over residues 418 to 435 (AYQQHGGAYGHQKQQQQG) the composition is skewed to low complexity. Position 456 is a cysteine methyl ester (cysteine 456). Residue cysteine 456 is the site of S-farnesyl cysteine attachment. A propeptide spans 457–459 (QQQ) (removed in mature form).

The protein localises to the membrane. It localises to the cytoplasm. It is found in the microsome. Its subcellular location is the mitochondrion. The protein resides in the nucleus. The protein localises to the perinuclear region. Functionally, co-chaperone for Hsp70 family members. Plays a role in protein transport into mitochondria and in the regulation of apoptosis via its role as co-chaperone. The protein is DnaJ homolog subfamily A member 1 homolog (dnaja1) of Dictyostelium discoideum (Social amoeba).